Reading from the N-terminus, the 491-residue chain is Probable ribonuclease FAU-1 (491 aa).

It belongs to the FAU-1 family.

Its function is as follows. Probable RNase involved in rRNA stability through maturation and/or degradation of precursor rRNAs. Binds to RNA in loop regions with AU-rich sequences. The sequence is that of Probable ribonuclease FAU-1 from Thermofilum pendens (strain DSM 2475 / Hrk 5).